The sequence spans 741 residues: Wall-associated receptor kinase 3 (741 aa).

Positions M1 to G23 are cleaved as a signal peptide. The Extracellular portion of the chain corresponds to Q24–R342. N37, N59, N78, N100, N103, N141, N192, N199, N232, N246, N261, and N266 each carry an N-linked (GlcNAc...) asparagine glycan. In terms of domain architecture, EGF-like 1 spans G245–K292. 6 disulfide bridges follow: C249-C264, C258-C275, C277-C291, C297-C310, C304-C319, and C321-C333. Residues D293 to T334 enclose the EGF-like 2; calcium-binding domain. An N-linked (GlcNAc...) asparagine glycan is attached at N303. N328 carries an N-linked (GlcNAc...) asparagine glycan. The chain crosses the membrane as a helical span at residues I343–H363. The Cytoplasmic portion of the chain corresponds to A364–R741. At T404 the chain carries Phosphothreonine. Residues Y415–S698 enclose the Protein kinase domain. ATP is bound by residues L421 to V429 and K443. The residue at position 488 (Y488) is a Phosphotyrosine. The Proton acceptor role is filled by D540. Residues T574 and T579 each carry the phosphothreonine modification. Position 587 is a phosphotyrosine (Y587).

The protein belongs to the protein kinase superfamily. Ser/Thr protein kinase family. Predominantly expressed in green tissues such as stems and leaves.

The protein resides in the membrane. The catalysed reaction is L-seryl-[protein] + ATP = O-phospho-L-seryl-[protein] + ADP + H(+). It carries out the reaction L-threonyl-[protein] + ATP = O-phospho-L-threonyl-[protein] + ADP + H(+). Its function is as follows. Serine/threonine-protein kinase that may function as a signaling receptor of extracellular matrix component. Binding to pectin may have significance in the control of cell expansion, morphogenesis and development. The polypeptide is Wall-associated receptor kinase 3 (WAK3) (Arabidopsis thaliana (Mouse-ear cress)).